The chain runs to 614 residues: Dihydroxy-acid dehydratase (614 aa).

D81 provides a ligand contact to Mg(2+). C122 is a [2Fe-2S] cluster binding site. Mg(2+) is bound by residues D123 and K124. N6-carboxylysine is present on K124. Position 193 (C193) interacts with [2Fe-2S] cluster. E489 is a binding site for Mg(2+). S515 acts as the Proton acceptor in catalysis.

The protein belongs to the IlvD/Edd family. Homodimer. It depends on [2Fe-2S] cluster as a cofactor. The cofactor is Mg(2+).

The catalysed reaction is (2R)-2,3-dihydroxy-3-methylbutanoate = 3-methyl-2-oxobutanoate + H2O. It carries out the reaction (2R,3R)-2,3-dihydroxy-3-methylpentanoate = (S)-3-methyl-2-oxopentanoate + H2O. Its pathway is amino-acid biosynthesis; L-isoleucine biosynthesis; L-isoleucine from 2-oxobutanoate: step 3/4. It participates in amino-acid biosynthesis; L-valine biosynthesis; L-valine from pyruvate: step 3/4. Functionally, functions in the biosynthesis of branched-chain amino acids. Catalyzes the dehydration of (2R,3R)-2,3-dihydroxy-3-methylpentanoate (2,3-dihydroxy-3-methylvalerate) into 2-oxo-3-methylpentanoate (2-oxo-3-methylvalerate) and of (2R)-2,3-dihydroxy-3-methylbutanoate (2,3-dihydroxyisovalerate) into 2-oxo-3-methylbutanoate (2-oxoisovalerate), the penultimate precursor to L-isoleucine and L-valine, respectively. The polypeptide is Dihydroxy-acid dehydratase (Cellvibrio japonicus (strain Ueda107) (Pseudomonas fluorescens subsp. cellulosa)).